A 673-amino-acid chain; its full sequence is Armadillo repeat-containing protein 8 (673 aa).

Alanine 2 bears the N-acetylalanine mark. 14 ARM repeats span residues 51–92, 95–134, 138–176, 178–217, 224–265, 269–309, 313–352, 374–413, 416–455, 458–497, 501–540, 543–585, 588–627, and 634–673; these read NKQK…SLAM, ENNV…TIFT, TPEE…HCCK, PDHQ…VLAF, MTLV…YMCR, IRTD…YLIE, ELQR…HDLK, DIRK…SLSR, QQLR…NLLL, SPSK…NMAF, QKIK…NLLS, PHID…NIAD, TAKE…NLTW, and QERQ…QYLA. Position 337 is a phosphoserine (serine 337). Residue serine 512 is modified to Phosphoserine.

In terms of assembly, identified in the CTLH complex that contains GID4, RANBP9 and/or RANBP10, MKLN1, MAEA, RMND5A (or alternatively its paralog RMND5B), GID8, ARMC8, WDR26 and YPEL5. Within this complex, MAEA, RMND5A (or alternatively its paralog RMND5B), GID8, WDR26, and RANBP9 and/or RANBP10 form the catalytic core, while GID4, MKLN1, ARMC8 and YPEL5 have ancillary roles.

The protein localises to the nucleus. The protein resides in the cytoplasm. In terms of biological role, component of the CTLH E3 ubiquitin-protein ligase complex that selectively accepts ubiquitin from UBE2H and mediates ubiquitination and subsequent proteasomal degradation of the transcription factor HBP1. The protein is Armadillo repeat-containing protein 8 (Armc8) of Mus musculus (Mouse).